Consider the following 347-residue polypeptide: MNPLILSMIMATIILGTLIVMTSSHWLMVWIGFEMNMLAILPVLMKKYNPRSMEAATKYFLTQATASMLLMLAITINLIYSGQWSTANPLNPTTSIIMTLALAMKLGLSPFHFWVPEVTQGIQLSSGLILLTWQKLAPMSILYQISPAINMDLLLSMSLMSVAIGGWGGLNQTQLRKIMAYSSIAHMGWMTAVMTYNPTMALLNLIIYILLTTTTFMTFMLNSTTTTLSLSHTWNKTPLLTTTILILMLSLGGLPPLSGFLPKWMIIQELTKNDSIITPTIMAITALLNLYFYMRLTYSTSLTMFPSVNNMKMKWQFNSMKQTTHLPPLIVLSTLILPMSPMLMLLE.

The next 10 membrane-spanning stretches (helical) occupy residues 4–21 (LILS…LIVM), 26–45 (WLMV…PVLM), 59–79 (YFLT…INLI), 96–116 (IIMT…FWVP), 122–142 (IQLS…MSIL), 148–168 (AINM…GGWG), 201–221 (ALLN…TFML), 242–262 (TTIL…GFLP), 274–294 (DSII…YFYM), and 326–346 (LPPL…LMLL).

It belongs to the complex I subunit 2 family. In terms of assembly, core subunit of respiratory chain NADH dehydrogenase (Complex I) which is composed of 45 different subunits. Interacts with TMEM242.

It localises to the mitochondrion inner membrane. The catalysed reaction is a ubiquinone + NADH + 5 H(+)(in) = a ubiquinol + NAD(+) + 4 H(+)(out). Its function is as follows. Core subunit of the mitochondrial membrane respiratory chain NADH dehydrogenase (Complex I) which catalyzes electron transfer from NADH through the respiratory chain, using ubiquinone as an electron acceptor. Essential for the catalytic activity and assembly of complex I. This Syconycteris australis (Southern blossom bat) protein is NADH-ubiquinone oxidoreductase chain 2.